We begin with the raw amino-acid sequence, 129 residues long: NADPH-dependent 7-cyano-7-deazaguanine reductase (129 aa).

Catalysis depends on Cys34, which acts as the Thioimide intermediate. Asp41 serves as the catalytic Proton donor. Substrate contacts are provided by residues 56–58 (VEL) and 75–76 (HE).

It belongs to the GTP cyclohydrolase I family. QueF type 1 subfamily.

It is found in the cytoplasm. The catalysed reaction is 7-aminomethyl-7-carbaguanine + 2 NADP(+) = 7-cyano-7-deazaguanine + 2 NADPH + 3 H(+). Its pathway is tRNA modification; tRNA-queuosine biosynthesis. In terms of biological role, catalyzes the NADPH-dependent reduction of 7-cyano-7-deazaguanine (preQ0) to 7-aminomethyl-7-deazaguanine (preQ1). The polypeptide is NADPH-dependent 7-cyano-7-deazaguanine reductase (Nitrosococcus oceani (strain ATCC 19707 / BCRC 17464 / JCM 30415 / NCIMB 11848 / C-107)).